The primary structure comprises 87 residues: U14-lycotoxin-Ls1a (87 aa).

Positions 1–20 (MNSKVFAVLLLLALLTCVLS) are cleaved as a signal peptide. Residues 21–66 (EKYCPTPRNTSCKKMNIRNNCCRDSDCTSNAFCCAEPCGNFCHKAS) form the WAP domain. 5 cysteine pairs are disulfide-bonded: C24–C54, C32–C58, C41–C53, C42–C80, and C47–C62.

The protein belongs to the venom protein 11 family. 01 (wap-1) subfamily. In terms of processing, contains 5 disulfide bonds. As to expression, expressed by the venom gland.

The protein localises to the secreted. Its function is as follows. Has antibacterial activity. This Lycosa singoriensis (Wolf spider) protein is U14-lycotoxin-Ls1a.